A 158-amino-acid polypeptide reads, in one-letter code: Ribosome maturation factor RimP (158 aa).

Belongs to the RimP family.

Its subcellular location is the cytoplasm. In terms of biological role, required for maturation of 30S ribosomal subunits. In Pseudomonas fluorescens (strain SBW25), this protein is Ribosome maturation factor RimP.